A 282-amino-acid chain; its full sequence is MLPLLRCVPRVLGSSVAGLRAAAPASPFRQLLQPAPRLCTRPFGLLSVRAGSERRPGLLRPRGPCACGCGCGSLHTDGDKAFVDFLSDEIKEERKIQKHKTLPKMSGGWELELNGTEAKLVRKVAGEKITVTFNINNSIPPTFDGEEEPSQGQKVEEQEPELTSTPNFVVEVIKNDDGKKALVLDCHYPEDEVGQEDEAESDIFSIREVSFQSTGESEWKDTNYTLNTDSLDWALYDHLMDFLADRGVDNTFADELVELSTALEHQEYITFLEDLKSFVKSQ.

The transit peptide at 1–73 directs the protein to the mitochondrion; sequence MLPLLRCVPR…PCACGCGCGS (73 aa). Positions 76–93 are C1q binding; it reads TDGDKAFVDFLSDEIKEE. Phosphoserine is present on Ser-87. Lys-91 carries the N6-acetyllysine modification. A disordered region spans residues 138–164; that stretch reads SIPPTFDGEEEPSQGQKVEEQEPELTS. The tract at residues 168 to 213 is interaction with MAVS; the sequence is FVVEVIKNDDGKKALVLDCHYPEDEVGQEDEAESDIFSIREVSFQS. Tyr-188 bears the Phosphotyrosine mark. Residues Ser-201 and Ser-205 each carry the phosphoserine modification. Thr-214 carries the post-translational modification Phosphothreonine.

This sequence belongs to the MAM33 family. In terms of assembly, homotrimer; three monomers form a donut-shaped structure with an unusually asymmetric charge distribution on the surface. Interacts with CDK13, HRK, VTN, NFYB, ADRA1B, FOXC1, DDX21, DDX50, NCL, SRSF1, SRSF9 and CDKN2A isoform smARF. Interacts with CD93; the association may represent a cell surface C1q receptor. Interacts with KRT1; the association represents a cell surface kininogen receptor. Interacts with CD209; the interaction is indicative for a C1q:C1QBP:CD209 signaling complex. Interacts with FBL and RRP1; the respective interactions with C1QBP are competitive. Probably associates with the mitoribosome. Interacts with MAVS; the interaction occurs upon viral transfection. Interacts with PPIF. Interacts with U2AF1L4. Interacts with PLEKHN1. Interacts with VGF-derived peptide TLQP-21. Interacts with POLGARF which is produced from an alternative reading frame of the POLG gene; the interaction results in nucleolar localization of C1QBP, probably due to prevention of C1QBP maturation and redirection from mitochondria to nucleoli. Interacts with MRE11 and RAD50; forming the MRC (MRE11-RAD50-C1QBP) complex that inhibits the activity of MRE11. (Microbial infection) Interacts with Rubella virus capsid protein; the interaction occurs in mitochondria. Interacts with Rubella virus protease/methyltransferase p150. As to quaternary structure, (Microbial infection) Interacts with Staphylococcus aureus protein A/spa. In terms of assembly, (Microbial infection) Interacts with Staphylococcus aureus protein A/spa, HIV-1 Tat and HCV core protein. (Microbial infection) Interacts with HIV-1 Tat and HCV core protein. As to quaternary structure, (Microbial infection) Interacts with L.monocytogenes internalin B. In terms of assembly, (Microbial infection) Interacts with Epstein-Barr virus EBNA1. As to expression, expressed on cell surface of peripheral blood cells (at protein level); Surface expression is reported for macrophages and monocyte-derived dendritic cells.

It localises to the mitochondrion matrix. The protein resides in the nucleus. It is found in the nucleolus. The protein localises to the cell membrane. Its subcellular location is the secreted. It localises to the cytoplasm. Multifunctional and multicompartmental protein involved in inflammation and infection processes, ribosome biogenesis, protein synthesis in mitochondria, regulation of apoptosis, transcriptional regulation and pre-mRNA splicing. At the cell surface is thought to act as an endothelial receptor for plasma proteins of the complement and kallikrein-kinin cascades. Putative receptor for C1q; specifically binds to the globular 'heads' of C1q thus inhibiting C1; may perform the receptor function through a complex with C1qR/CD93. In complex with cytokeratin-1/KRT1 is a high affinity receptor for kininogen-1/HMWK. Can also bind other plasma proteins, such as coagulation factor XII leading to its autoactivation. May function to bind initially fluid kininogen-1 to the cell membrane. The secreted form may enhance both extrinsic and intrinsic coagulation pathways. It is postulated that the cell surface form requires docking with transmembrane proteins for downstream signaling which might be specific for a cell-type or response. By acting as C1q receptor is involved in chemotaxis of immature dendritic cells and neutrophils and is proposed to signal through CD209/DC-SIGN on immature dendritic cells, through integrin alpha-4/beta-1 during trophoblast invasion of the decidua, and through integrin beta-1 during endothelial cell adhesion and spreading. Signaling involved in inhibition of innate immune response is implicating the PI3K-AKT/PKB pathway. Required for protein synthesis in mitochondria. In mitochondrial translation may be involved in formation of functional 55S mitoribosomes; the function seems to involve its RNA-binding activity. Acts as a RNA modification reader, which specifically recognizes and binds mitochondrial RNAs modified by C5-methylcytosine (m5C) in response to stress, and promotes recruitment of the mitochondrial degradosome complex, leading to their degradation. May be involved in the nucleolar ribosome maturation process; the function may involve the exchange of FBL for RRP1 in the association with pre-ribosome particles. Involved in regulation of RNA splicing by inhibiting the RNA-binding capacity of SRSF1 and its phosphorylation. Is required for the nuclear translocation of splicing factor U2AF1L4. Involved in regulation of CDKN2A- and HRK-mediated apoptosis. Stabilizes mitochondrial CDKN2A isoform smARF. May be involved in regulation of FOXC1 transcriptional activity and NFY/CCAAT-binding factor complex-mediated transcription. May play a role in antibacterial defense as it can bind to cell surface hyaluronan and inhibit Streptococcus pneumoniae hyaluronate lyase. May be involved in modulation of the immune response; ligation by HCV core protein is resulting in suppression of interleukin-12 production in monocyte-derived dendritic cells. Involved in regulation of antiviral response by inhibiting RIGI- and IFIH1-mediated signaling pathways probably involving its association with MAVS after viral infection. Acts as a regulator of DNA repair via homologous recombination by inhibiting the activity of MRE11: interacts with unphosphorylated MRE11 and RAD50 in absence of DNA damage, preventing formation and activity of the MRN complex. Following DNA damage, dissociates from phosphorylated MRE11, allowing formation of the MRN complex. In terms of biological role, (Microbial infection) Involved in HIV-1 replication, presumably by contributing to splicing of viral RNA. Functionally, (Microbial infection) In infection processes acts as an attachment site for microbial proteins, including Listeria monocytogenes internalin B (InlB) and Staphylococcus aureus protein A. Its function is as follows. (Microbial infection) Involved in replication of Rubella virus. The polypeptide is Complement component 1 Q subcomponent-binding protein, mitochondrial (C1QBP) (Homo sapiens (Human)).